A 330-amino-acid polypeptide reads, in one-letter code: D-lactate dehydrogenase (330 aa).

NAD(+) contacts are provided by residues 156–157, D176, 206–207, 233–235, and D259; these read RI, VP, and AAR. R235 is a catalytic residue. Residue E264 is part of the active site. Residue H296 is the Proton donor of the active site.

It belongs to the D-isomer specific 2-hydroxyacid dehydrogenase family.

It carries out the reaction (R)-lactate + NAD(+) = pyruvate + NADH + H(+). This Staphylococcus aureus (strain MSSA476) protein is D-lactate dehydrogenase (ldhD).